We begin with the raw amino-acid sequence, 369 residues long: uncharacterized protein (369 aa).

This sequence to A.pernix APE1276 and APE1804.

This is an uncharacterized protein from Saccharolobus solfataricus (strain ATCC 35092 / DSM 1617 / JCM 11322 / P2) (Sulfolobus solfataricus).